Here is a 427-residue protein sequence, read N- to C-terminus: Phosphatase PSR1 (427 aa).

S-palmitoyl cysteine attachment occurs at residues C9 and C10. A compositionally biased stretch (polar residues) spans 14–34 (TTQSNSNSAYRQQQSSSLNKN). The interval 14 to 223 (TTQSNSNSAY…SNDADDEDDE (210 aa)) is disordered. The span at 35-48 (RSVKHSNTKSRTRG) shows a compositional bias: basic residues. Residues 49–80 (VHQTNSPPSKTNSAATFSSTERSTGKSGISTN) are compositionally biased toward polar residues. The span at 104 to 118 (KVEKRISKDDLYEEK) shows a compositional bias: basic and acidic residues. S110 is subject to Phosphoserine. Residues 119-130 (YEVDEDEEIDDE) show a composition bias toward acidic residues. Basic and acidic residues predominate over residues 131–151 (DNRRSRGIVQEKGDAVKDTSR). Residue K154 forms a Glycyl lysine isopeptide (Lys-Gly) (interchain with G-Cter in ubiquitin) linkage. Residues 155-183 (QQQQQQQQSQPQPQPQSQSQSQSQSQSQQ) are compositionally biased toward low complexity. Residues 184 to 214 (RGPTVQVSSDHLIQDMNLSRVSSSSQASETS) are compositionally biased toward polar residues. An FCP1 homology domain is found at 253-411 (STKGKKCLIL…LDIIPLLEDL (159 aa)).

As to quaternary structure, interacts with WHI2.

It localises to the cell membrane. In terms of biological role, has phosphatase activity in vitro. Involved in the response to sodium and lithium ion stress (but not to potassium or sorbitol stress) by inducing transcription of the sodium pump ENA1/PMR2. Acts through a calcineurin-independent pathway and is functionally redundant with PSR2. Also involved in the general stress response; acts together with WHI2 to activate stress response element (STRE)-mediated gene expression, possibly through dephosphorylation of MSN2. The sequence is that of Phosphatase PSR1 (PSR1) from Saccharomyces cerevisiae (strain ATCC 204508 / S288c) (Baker's yeast).